The primary structure comprises 229 residues: 7-cyano-7-deazaguanine synthase (229 aa).

ATP is bound at residue 15–25 (LSGGLDSATVV). Zn(2+) contacts are provided by C194, C204, C207, and C210.

The protein belongs to the QueC family. It depends on Zn(2+) as a cofactor.

The catalysed reaction is 7-carboxy-7-deazaguanine + NH4(+) + ATP = 7-cyano-7-deazaguanine + ADP + phosphate + H2O + H(+). Its pathway is purine metabolism; 7-cyano-7-deazaguanine biosynthesis. Its function is as follows. Catalyzes the ATP-dependent conversion of 7-carboxy-7-deazaguanine (CDG) to 7-cyano-7-deazaguanine (preQ(0)). The sequence is that of 7-cyano-7-deazaguanine synthase from Pseudomonas savastanoi pv. phaseolicola (strain 1448A / Race 6) (Pseudomonas syringae pv. phaseolicola (strain 1448A / Race 6)).